We begin with the raw amino-acid sequence, 390 residues long: NADH-quinone oxidoreductase subunit D (390 aa).

Belongs to the complex I 49 kDa subunit family. In terms of assembly, NDH-1 is composed of 14 different subunits. Subunits NuoB, C, D, E, F, and G constitute the peripheral sector of the complex.

Its subcellular location is the cell membrane. It catalyses the reaction a quinone + NADH + 5 H(+)(in) = a quinol + NAD(+) + 4 H(+)(out). NDH-1 shuttles electrons from NADH, via FMN and iron-sulfur (Fe-S) centers, to quinones in the respiratory chain. The immediate electron acceptor for the enzyme in this species is believed to be ubiquinone. Couples the redox reaction to proton translocation (for every two electrons transferred, four hydrogen ions are translocated across the cytoplasmic membrane), and thus conserves the redox energy in a proton gradient. This is NADH-quinone oxidoreductase subunit D from Wolbachia pipientis wMel.